The following is a 431-amino-acid chain: UDP-N-acetylglucosamine 1-carboxyvinyltransferase (431 aa).

22–23 is a binding site for phosphoenolpyruvate; that stretch reads KN. R93 is a UDP-N-acetyl-alpha-D-glucosamine binding site. The Proton donor role is filled by C117. 2-(S-cysteinyl)pyruvic acid O-phosphothioketal is present on C117. UDP-N-acetyl-alpha-D-glucosamine is bound by residues D307 and V329.

Belongs to the EPSP synthase family. MurA subfamily.

It localises to the cytoplasm. The catalysed reaction is phosphoenolpyruvate + UDP-N-acetyl-alpha-D-glucosamine = UDP-N-acetyl-3-O-(1-carboxyvinyl)-alpha-D-glucosamine + phosphate. It participates in cell wall biogenesis; peptidoglycan biosynthesis. Functionally, cell wall formation. Adds enolpyruvyl to UDP-N-acetylglucosamine. The polypeptide is UDP-N-acetylglucosamine 1-carboxyvinyltransferase (Nitrosococcus oceani (strain ATCC 19707 / BCRC 17464 / JCM 30415 / NCIMB 11848 / C-107)).